The following is a 175-amino-acid chain: Small ribosomal subunit protein bS16 (175 aa).

The protein belongs to the bacterial ribosomal protein bS16 family.

This chain is Small ribosomal subunit protein bS16, found in Cytophaga hutchinsonii (strain ATCC 33406 / DSM 1761 / CIP 103989 / NBRC 15051 / NCIMB 9469 / D465).